Here is a 339-residue protein sequence, read N- to C-terminus: D-alanine--D-alanine ligase (339 aa).

The region spanning 115 to 327 (KHIFRSLGID…FNELVKIIIE (213 aa)) is the ATP-grasp domain. An ATP-binding site is contributed by 142–211 (KIDYPYVLKP…EEYIPGIELH (70 aa)). Residues aspartate 279, glutamate 293, and asparagine 295 each contribute to the Mg(2+) site.

This sequence belongs to the D-alanine--D-alanine ligase family. Requires Mg(2+) as cofactor. Mn(2+) is required as a cofactor.

The protein localises to the cytoplasm. The catalysed reaction is 2 D-alanine + ATP = D-alanyl-D-alanine + ADP + phosphate + H(+). It participates in cell wall biogenesis; peptidoglycan biosynthesis. Cell wall formation. In Wolbachia sp. subsp. Brugia malayi (strain TRS), this protein is D-alanine--D-alanine ligase.